Reading from the N-terminus, the 239-residue chain is Adapter protein MecA (239 aa).

Residues 118-128 (EQRTKEKEAQG) show a composition bias toward basic and acidic residues. The interval 118-137 (EQRTKEKEAQGSKRQKSSAR) is disordered.

This sequence belongs to the MecA family. In terms of assembly, homodimer.

Enables the recognition and targeting of unfolded and aggregated proteins to the ClpC protease or to other proteins involved in proteolysis. The polypeptide is Adapter protein MecA (Staphylococcus aureus (strain COL)).